The sequence spans 265 residues: MNKLQEEWNRFCASWMFNTRLPILPFYVYSESTLSRSSRYFPLIGWIVSAGTSYSTYFLSWILPIEISIILGMILSVLITGGFHEDGLADVCDAFGGGWSKEKILEIMKDSRIGTFGSIGLILSLGLKYLLLVNLFKISPWIFLFTSWFSHSASRWFALLLMMLIPYARENDLSKSKPMIKKLPPFDFALSTFFGCFPAVYFLYQFQNQIPNVLLGFFLSSIFVFYFRNYFNKWIEGFTGDCLGFIQQGTELLFYLGITVSWNSI.

5 helical membrane-spanning segments follow: residues 59–79 (LSWILPIEISIILGMILSVLI), 113–133 (IGTFGSIGLILSLGLKYLLLV), 141–161 (WIFLFTSWFSHSASRWFALLL), 183–203 (LPPFDFALSTFFGCFPAVYFL), and 206–226 (FQNQIPNVLLGFFLSSIFVFY).

It belongs to the CobS family. Mg(2+) serves as cofactor.

The protein localises to the cell inner membrane. The catalysed reaction is alpha-ribazole + adenosylcob(III)inamide-GDP = adenosylcob(III)alamin + GMP + H(+). It catalyses the reaction alpha-ribazole 5'-phosphate + adenosylcob(III)inamide-GDP = adenosylcob(III)alamin 5'-phosphate + GMP + H(+). It functions in the pathway cofactor biosynthesis; adenosylcobalamin biosynthesis; adenosylcobalamin from cob(II)yrinate a,c-diamide: step 7/7. Functionally, joins adenosylcobinamide-GDP and alpha-ribazole to generate adenosylcobalamin (Ado-cobalamin). Also synthesizes adenosylcobalamin 5'-phosphate from adenosylcobinamide-GDP and alpha-ribazole 5'-phosphate. The protein is Adenosylcobinamide-GDP ribazoletransferase of Leptospira interrogans serogroup Icterohaemorrhagiae serovar copenhageni (strain Fiocruz L1-130).